The following is a 308-amino-acid chain: Probable peptidyl-prolyl cis-trans isomerase B (308 aa).

The tract at residues 74–123 (DHQSTTSATPTDSASTSPPQAATAPPLPPFKPSANLGANCQYPPSPDKAV) is disordered. Over residues 77–97 (STTSATPTDSASTSPPQAATA) the composition is skewed to low complexity. Residues 139–307 (AQVSVSMVTN…TEVTITSVLL (169 aa)) form the PPIase cyclophilin-type domain.

This sequence belongs to the cyclophilin-type PPIase family.

The enzyme catalyses [protein]-peptidylproline (omega=180) = [protein]-peptidylproline (omega=0). Its function is as follows. PPIases accelerate the folding of proteins. It catalyzes the cis-trans isomerization of proline imidic peptide bonds in oligopeptides. The sequence is that of Probable peptidyl-prolyl cis-trans isomerase B (ppiB) from Mycobacterium tuberculosis (strain CDC 1551 / Oshkosh).